Consider the following 1744-residue polypeptide: Complement C4-A (1744 aa).

The first 19 residues, 1-19, serve as a signal peptide directing secretion; it reads MRLLWGLIWASSFFTLSLQ. Residues Cys-68 and Cys-97 are joined by a disulfide bond. A glycan (N-linked (GlcNAc...) asparagine) is linked at Asn-226. The cysteines at positions 635 and 669 are disulfide-linked. The propeptide occupies 676 to 679; that stretch reads RKKR. Intrachain disulfides connect Cys-702-Cys-728, Cys-703-Cys-735, and Cys-716-Cys-736. The region spanning 702 to 736 is the Anaphylatoxin-like domain; sequence CCQDGVTRLPMMRSCEQRAARVQQPDCREPFLSCC. Residue Asn-862 is glycosylated (N-linked (GlcNAc...) asparagine). Phosphoserine; by FAM20C is present on Ser-918. A cross-link (isoglutamyl cysteine thioester (Cys-Gln)) is located at residues 1010-1013; sequence CGEQ. Residue Thr-1244 is glycosylated (O-linked (GalNAc...) threonine). Asn-1328 is a glycosylation site (N-linked (GlcNAc...) (complex) asparagine). Asn-1391 carries N-linked (GlcNAc...) asparagine glycosylation. Sulfotyrosine is present on residues Tyr-1417, Tyr-1420, and Tyr-1422. A propeptide spanning residues 1447-1453 is cleaved from the precursor; it reads RRNRRRR. 5 disulfide bridges follow: Cys-1471–Cys-1535, Cys-1583–Cys-1588, Cys-1595–Cys-1673, Cys-1618–Cys-1742, and Cys-1718–Cys-1727. The NTR domain maps to 1595–1742; it reads CPRQRRALER…FLQEYGTQGC (148 aa).

As to quaternary structure, complement circulates in blood as a disulfide-linked trimer of an alpha, beta and gamma chain. Complement C4b is composed of complement C4b-A, complement C4 beta and complement C4 gamma chains that are associated via disulfide bonds. Non-enzymatic component of the C3 convertase, also named C4bC2b, composed of the serine protease complement C2b (C2), as well as complement C4b. Non-enzymatic component of the C5 convertase, also named C4bC2bC3b, composed of the serine protease complement C2b (C2), complement C3b, as well as complement C4b. In terms of processing, prior to secretion, the single-chain precursor is enzymatically cleaved by plasminogen (PLG) to yield non-identical chains alpha, beta and gamma. During activation of the complement systems, the alpha chain is cleaved into C4a and C4b by different proteases depending on the complement pathway: C4b stays linked to the beta and gamma chains, while C4a is released in the plasma. The alpha chain is cleaved by C1S to generate C4a and C4b following activation by the classical complement system. The alpha chain is cleaved to generate C4a and C4b by MASP2 following activation by the lectin complement system. The alpha chain is cleaved by GZMK to generate C4a and C4b following activation by the GZMK complement system. Further degradation of C4b by C1 into the inactive fragments C4c and C4d blocks the generation of C3 convertase. The proteolytic cleavages often are incomplete so that many structural forms can be found in plasma. Post-translationally, upon activation, the internal thioester bond reacts with carbohydrate antigens on the target surface to form amide or ester bonds, leading to covalent association with the surface of pathogens. Ser-1236 of complement C4b interacts with complement C3b via a thioester linkage. In terms of processing, N- and O-glycosylated. O-glycosylated with a core 1 or possibly core 8 glycan. Complement component C4 is expressed at highest levels in the liver, at moderate levels in the adrenal cortex, adrenal medulla, thyroid gland, and the kidney, and at lowest levels in the heart, ovary, small intestine, thymus, pancreas and spleen. The extra-hepatic sites of expression may be important for the local protection and inflammatory response.

It localises to the secreted. The protein localises to the synapse. Its subcellular location is the cell projection. The protein resides in the axon. It is found in the dendrite. It localises to the cell surface. Its activity is regulated as follows. Specifically inhibited by nanobody hC4Nb8, inhibiting the classical complement pathway. Specifically inhibited by NbB5, NbE11 and NbH9 nanobodies, and to a lesser extent by NbH11 and NbE3 nanobodies. Its function is as follows. Precursor of non-enzymatic components of the classical, lectin and GZMK complement pathways, which consist in a cascade of proteins that leads to phagocytosis and breakdown of pathogens and signaling that strengthens the adaptive immune system. In terms of biological role, non-enzymatic component of C3 and C5 convertases. Generated following cleavage by complement proteases (C1S, MASP2 or GZMK, depending on the complement pathway), it covalently attaches to the surface of pathogens, where it acts as an opsonin that marks the surface of antigens for removal. It then recruits the serine protease complement C2b to form the C3 and C5 convertases, which cleave and activate C3 and C5, respectively, the next components of the complement pathways. Complement C4b-A isotype is responsible for effective binding to form amide bonds with immune aggregates or protein antigens, while complement C4b-B isotype catalyzes the transacylation of the thioester carbonyl group to form ester bonds with carbohydrate antigens. Functionally, putative humoral mediator released following cleavage by complement proteases (C1S, MASP2 or GZMK, depending on the complement pathway). While it is strongly similar to anaphylatoxins, its role is unclear. Was reported to act as a mediator of local inflammatory process; however these effects were probably due to contamination with C3a and/C5a anaphylatoxins in biological assays. In Homo sapiens (Human), this protein is Complement C4-A.